Here is a 605-residue protein sequence, read N- to C-terminus: MRTQYCGQVTEQLLGQSVTLSGWAHRRRDHGGVIFIDLRDREGLVQVVCDPDRPEMFKVAEGVRNEFCLQVKGIVRARPEGTTNPNLASGKIEVLCHELTVLNASVTPPFQLDDDNLSETTRLTHRVLDLRRPQMQYNLRLRYKVAMEVRKYLDDKGFIDIETPMLTKSTPEGARDYLVPSRVNAGQFFALPQSPQLFKQMLMVSGFDRYYQITKCFRDEDLRADRQPEFTQIDCETSFLSEQEIRDLFEEMIRTVFQNTMSVALDAKFPVMEFREAMARFGSDKPDLRVKLEFTELTDAMKDVDFKVFSGPANAEGGRVVALRVPGGAALSRGDIDAYTKFVEIYGAKGLAWIKVNEVAKGRDGLQSPIVKNLHDAAIAEILKRSGAQDGDILFFGADRAKVVNDAMGALRLKVGHSDFAKSTGLFEDAWKPLWVVDFPMFEYDEEDARWVAMHHPFTSPKDEHLEYLETDPGKCIAKAYDMVLNGWEIGGGSVRIYREEVQSKVFRALKIGDEEARAKFGFLLDALQYGAPPHGGIAFGLDRVVTMMAGADSIRDVIAFPKTQRAQDLLTQAPSPVDEKQLRELHIRLRAAEAKVAAPAAATA.

Glu-172 lines the L-aspartate pocket. Positions 196–199 are aspartate; that stretch reads QLFK. Arg-218 contributes to the L-aspartate binding site. Residues 218–220 and Gln-227 contribute to the ATP site; that span reads RDE. His-455 serves as a coordination point for L-aspartate. Position 489 (Glu-489) interacts with ATP. Residue Arg-496 coordinates L-aspartate. 541-544 contributes to the ATP binding site; the sequence is GLDR.

The protein belongs to the class-II aminoacyl-tRNA synthetase family. Type 1 subfamily. As to quaternary structure, homodimer.

Its subcellular location is the cytoplasm. The catalysed reaction is tRNA(Asx) + L-aspartate + ATP = L-aspartyl-tRNA(Asx) + AMP + diphosphate. In terms of biological role, aspartyl-tRNA synthetase with relaxed tRNA specificity since it is able to aspartylate not only its cognate tRNA(Asp) but also tRNA(Asn). Reaction proceeds in two steps: L-aspartate is first activated by ATP to form Asp-AMP and then transferred to the acceptor end of tRNA(Asp/Asn). The protein is Aspartate--tRNA(Asp/Asn) ligase of Ralstonia nicotianae (strain ATCC BAA-1114 / GMI1000) (Ralstonia solanacearum).